Reading from the N-terminus, the 600-residue chain is Integrator complex subunit 11 (600 aa).

Residues H68, H70, D72, H73, H157, and D178 each coordinate Zn(2+). The short motif at 68–73 (HFHLDH) is the HXHXDH motif element. E203 is a catalytic residue. A Glycyl lysine isopeptide (Lys-Gly) (interchain with G-Cter in SUMO) cross-link involves residue K381. Residue H414 coordinates Zn(2+). Glycyl lysine isopeptide (Lys-Gly) (interchain with G-Cter in SUMO) cross-links involve residues K462 and K475. Residues 469–479 (LLPEAKKPRLL) carry the Nuclear localization signal motif.

The protein belongs to the metallo-beta-lactamase superfamily. RNA-metabolizing metallo-beta-lactamase-like family. INTS11 subfamily. In terms of assembly, component of the Integrator complex, composed of core subunits INTS1, INTS2, INTS3, INTS4, INTS5, INTS6, INTS7, INTS8, INTS9/RC74, INTS10, INTS11/CPSF3L, INTS12, INTS13, INTS14 and INTS15. The core complex associates with protein phosphatase 2A subunits PPP2CA and PPP2R1A, to form the Integrator-PP2A (INTAC) complex. INTS11 is part of the RNA endonuclease subcomplex, composed of INTS4, INTS9, INTS11 and inositol hexakisphosphate (InsP6). Interacts with WDR73; interaction is required for the assembly of the RNA endonuclease subcomplex in the cytoplasm. Interacts with BRAT1; interaction is required for the assembly of the RNA endonuclease subcomplex and inhibits the endonuclease activity of INTS11 before formation of mature integrator complex. It depends on Zn(2+) as a cofactor. In terms of processing, sumoylated; sumoylation regulates its subcellular location and is required for integrator complex integrity.

It is found in the nucleus. Its subcellular location is the cytoplasm. With respect to regulation, the RNA endonuclease activity is inhibited by BRAT1 that forms hyrogen bond and hydrophobic interactions with the active site. Functionally, RNA endonuclease component of the integrator complex, a multiprotein complex that terminates RNA polymerase II (Pol II) transcription in the promoter-proximal region of genes. The integrator complex provides a quality checkpoint during transcription elongation by driving premature transcription termination of transcripts that are unfavorably configured for transcriptional elongation: the complex terminates transcription by (1) catalyzing dephosphorylation of the C-terminal domain (CTD) of Pol II subunit POLR2A/RPB1 and SUPT5H/SPT5, (2) degrading the exiting nascent RNA transcript via endonuclease activity and (3) promoting the release of Pol II from bound DNA. The integrator complex is also involved in terminating the synthesis of non-coding Pol II transcripts, such as enhancer RNAs (eRNAs), small nuclear RNAs (snRNAs), telomerase RNAs and long non-coding RNAs (lncRNAs). Within the integrator complex, INTS11 constitutes the RNA endonuclease subunit that degrades exiting nascent RNA transcripts. Mediates recruitment of cytoplasmic dynein to the nuclear envelope, probably as component of the integrator complex. The sequence is that of Integrator complex subunit 11 from Mus musculus (Mouse).